A 932-amino-acid polypeptide reads, in one-letter code: Protocadherin gamma-A8 (932 aa).

The signal sequence occupies residues 1–29; sequence MAAPQSRPRRGELILLCALLGTLWEIGRG. Cadherin domains lie at 30–133, 134–242, 243–347, 348–452, 453–562, and 570–682; these read QIRY…NPKF, QVED…APVF, PHPI…RPEV, IITS…PPTF, PHAS…APEI, and DGST…KPSV. Residues 30–692 lie on the Extracellular side of the membrane; it reads QIRYSVPEET…DPNDSSLTLY (663 aa). The N-linked (GlcNAc...) asparagine glycan is linked to Asn47. Residues Asn414, Asn419, and Asn545 are each glycosylated (N-linked (GlcNAc...) asparagine). A glycan (N-linked (GlcNAc...) asparagine) is linked at Asn685. Residues 693 to 713 traverse the membrane as a helical segment; that stretch reads LVVAVAAISCVFLAFVAVLLG. The Cytoplasmic portion of the chain corresponds to 714 to 932; it reads LRLRRWHKSH…KKKSGKKEKK (219 aa). 2 disordered regions span residues 804–841 and 902–932; these read ADHG…WPNN and ATLT…KEKK. Positions 810-841 are enriched in polar residues; the sequence is APPNTDWRFSQAQRPGTSGSQNGDDTGTWPNN. Over residues 922 to 932 the composition is skewed to basic residues; that stretch reads NKKKSGKKEKK.

The protein resides in the cell membrane. Functionally, potential calcium-dependent cell-adhesion protein. May be involved in the establishment and maintenance of specific neuronal connections in the brain. The protein is Protocadherin gamma-A8 (PCDHGA8) of Pan troglodytes (Chimpanzee).